The following is an 89-amino-acid chain: UPF0175 protein ssl1255 (89 aa).

The protein belongs to the UPF0175 family.

This chain is UPF0175 protein ssl1255, found in Synechocystis sp. (strain ATCC 27184 / PCC 6803 / Kazusa).